The following is a 156-amino-acid chain: Small ribosomal subunit protein uS7 (156 aa).

Belongs to the universal ribosomal protein uS7 family. As to quaternary structure, part of the 30S ribosomal subunit. Contacts proteins S9 and S11.

Functionally, one of the primary rRNA binding proteins, it binds directly to 16S rRNA where it nucleates assembly of the head domain of the 30S subunit. Is located at the subunit interface close to the decoding center, probably blocks exit of the E-site tRNA. The polypeptide is Small ribosomal subunit protein uS7 (Methylibium petroleiphilum (strain ATCC BAA-1232 / LMG 22953 / PM1)).